Here is a 396-residue protein sequence, read N- to C-terminus: Gap junction gamma-1 protein (396 aa).

At Met-1–Lys-22 the chain is on the cytoplasmic side. The helical transmembrane segment at Ile-23–Tyr-45 threads the bilayer. Over Asp-46–Arg-75 the chain is Extracellular. Residues Phe-76 to Ala-95 traverse the membrane as a helical segment. Over Ile-96–Lys-175 the chain is Cytoplasmic. Positions Glu-145–Arg-165 are disordered. The span at Glu-147–Asn-156 shows a compositional bias: basic and acidic residues. Residues Ile-176–Leu-198 form a helical membrane-spanning segment. The Extracellular segment spans residues Tyr-199 to Lys-228. Residues Thr-229 to Trp-248 form a helical membrane-spanning segment. The Cytoplasmic portion of the chain corresponds to Glu-249–Ile-396. Positions Ala-355–Ile-396 are disordered. Over residues Gly-373–Ile-396 the composition is skewed to low complexity.

This sequence belongs to the connexin family. Gamma-type subfamily. As to quaternary structure, a connexon is composed of a hexamer of connexins. Interacts with CNST.

Its subcellular location is the cell membrane. The protein resides in the cell junction. The protein localises to the gap junction. One gap junction consists of a cluster of closely packed pairs of transmembrane channels, the connexons, through which materials of low MW diffuse from one cell to a neighboring cell. The polypeptide is Gap junction gamma-1 protein (GJC1) (Canis lupus familiaris (Dog)).